A 277-amino-acid chain; its full sequence is PHD finger protein ALFIN-LIKE 9 (277 aa).

Disordered stretches follow at residues 138–206 (KSKA…EEEH) and 255–277 (PSCS…ARPS). Positions 145-160 (SANNHSNSKSKSSNKT) are enriched in low complexity. The PHD-type zinc finger occupies 208-260 (ETLCGACGESYGADEFWICCDICEKWFHGKCVKITPAKAEHIKQYKCPSCSGG). Positions 259 to 270 (GGNGGGGGGSGN) are enriched in gly residues.

Belongs to the Alfin family. Interacts with H3K4me3 and to a lesser extent with H3K4me2.

The protein localises to the nucleus. In terms of biological role, histone-binding component that specifically recognizes H3 tails trimethylated on 'Lys-4' (H3K4me3), which mark transcription start sites of virtually all active genes. This chain is PHD finger protein ALFIN-LIKE 9, found in Oryza sativa subsp. indica (Rice).